The primary structure comprises 560 residues: uncharacterized protein (560 aa).

The zn(2)-C6 fungal-type DNA-binding region spans 18–44 (CLRCRRRKVKCDRQYPCSRCKESEESC). Residues 60–80 (LSRPITRETDSSAHQETRTRL) are disordered. Positions 64 to 80 (ITRETDSSAHQETRTRL) are enriched in basic and acidic residues. The chain crosses the membrane as a helical span at residues 182 to 202 (FATSIILIVTAIAVALSLESF).

It localises to the nucleus membrane. This is an uncharacterized protein from Schizosaccharomyces pombe (strain 972 / ATCC 24843) (Fission yeast).